Consider the following 141-residue polypeptide: Sigma factor binding protein 2, chloroplastic (141 aa).

A compositionally biased stretch (polar residues) spans 1 to 20 (MDQSSSTLLINQRKSSSSPT). Residues 1-36 (MDQSSSTLLINQRKSSSSPTRIPPKQKRKSTTTHKP) form a disordered region. The N-terminal 38 residues, 1-38 (MDQSSSTLLINQRKSSSSPTRIPPKQKRKSTTTHKPIK), are a transit peptide targeting the chloroplast. Positions 13–29 (RKSSSSPTRIPPKQKRK) match the Bipartite nuclear localization signal motif. Over residues 24-36 (PKQKRKSTTTHKP) the composition is skewed to basic residues. Positions 55-64 (FRELVQELTG) match the VQ motif.

Interacts with sigma factors in chloroplast. Interacts with WRKY33 in the nucleus.

It is found in the plastid. The protein localises to the chloroplast. The protein resides in the nucleus. Functionally, functions as activator of WRKY33 in plant defense against necrotrophic pathogens by stimulating the DNA-binding activity of WRKY33. This Arabidopsis thaliana (Mouse-ear cress) protein is Sigma factor binding protein 2, chloroplastic (SIB2).